A 278-amino-acid chain; its full sequence is Secreted RxLR effector protein 151 (278 aa).

An N-terminal signal peptide occupies residues 1 to 18 (MRNRAVLFGLFFIGYSSC). Residues 49 to 64 (RLLQVDGPKRILAEER) carry the RxLR-dEER motif.

The protein belongs to the RxLR effector family.

The protein resides in the secreted. It is found in the host endoplasmic reticulum membrane. Functionally, secreted effector that completely suppresses the host cell death induced by cell death-inducing proteins. In Plasmopara viticola (Downy mildew of grapevine), this protein is Secreted RxLR effector protein 151.